A 402-amino-acid polypeptide reads, in one-letter code: Tryptophan synthase beta chain (402 aa).

Lysine 92 is modified (N6-(pyridoxal phosphate)lysine).

This sequence belongs to the TrpB family. As to quaternary structure, tetramer of two alpha and two beta chains. Requires pyridoxal 5'-phosphate as cofactor.

It carries out the reaction (1S,2R)-1-C-(indol-3-yl)glycerol 3-phosphate + L-serine = D-glyceraldehyde 3-phosphate + L-tryptophan + H2O. Its pathway is amino-acid biosynthesis; L-tryptophan biosynthesis; L-tryptophan from chorismate: step 5/5. In terms of biological role, the beta subunit is responsible for the synthesis of L-tryptophan from indole and L-serine. The sequence is that of Tryptophan synthase beta chain from Staphylococcus epidermidis (strain ATCC 35984 / DSM 28319 / BCRC 17069 / CCUG 31568 / BM 3577 / RP62A).